A 152-amino-acid polypeptide reads, in one-letter code: Globin CTT-E/E' (152 aa).

Positions 1–15 are cleaved as a signal peptide; it reads MKFIILALCVAAASA. Residues 16-152 enclose the Globin domain; that stretch reads LSGDQIGLVQ…AFFGAVFAKM (137 aa). H73 and H102 together coordinate heme b.

This sequence belongs to the globin family.

In Chironomus thummi thummi (Midge), this protein is Globin CTT-E/E' (CTT-E).